Reading from the N-terminus, the 227-residue chain is Glial cell line-derived neurotrophic factor (227 aa).

The signal sequence occupies residues 1–19 (MKLWAILAVCILLLSSVSS). Residues 20–93 (IPLPSNWLAG…EFIQDTIKRL (74 aa)) constitute a propeptide that is removed on maturation. Disordered regions lie at residues 32–61 (RSHLPDPQEGEDQVFGMDGAVPEDPTANMA) and 93–113 (LKRSSNKQPPSRRDRGRQSLA). Cystine bridges form between Cys-134/Cys-195, Cys-161/Cys-224, and Cys-165/Cys-226. Asn-142 and Asn-178 each carry an N-linked (GlcNAc...) asparagine glycan.

This sequence belongs to the TGF-beta family. GDNF subfamily. Homodimer; disulfide-linked. Interacts with GFRA1 coreceptor and RET: forms a 2:2:2 ternary complex composed of GDNF ligand, GFRA1 and RET receptor. In terms of tissue distribution, from stage 22, expressed in somites and the pronephros. At stage 24 and 26, expressed in the pharyngeal arches I-III. At stage 31, expression in the eye, central nervous system and pharyngeal arches IV and V increases. Up to stage 34, expression becomes intense at the oral cavity and lateral line structures. At this stage, expression weakens in the pharyngeal arches, and increases in the epibranchial arches. Expressed in the digestive tract in stage 34 embryos.

Its subcellular location is the secreted. Neurotrophic factor that enhances survival and morphological differentiation of dopaminergic neurons and increases their high-affinity dopamine uptake. Acts by binding to its coreceptor, GFRA1, leading to autophosphorylation and activation of the RET receptor. The sequence is that of Glial cell line-derived neurotrophic factor from Xenopus laevis (African clawed frog).